A 701-amino-acid polypeptide reads, in one-letter code: Ubiquitin thioesterase zranb1-A (701 aa).

3 consecutive RanBP2-type zinc fingers follow at residues 3–33, 79–108, and 143–173; these read EHGI…PRPS, PSSK…QRRT, and IKGQ…PTPN. Cys10, Cys13, Cys24, Cys27, Cys85, Cys88, Cys99, and Cys102 together coordinate Zn(2+). A compositionally biased stretch (polar residues) spans 108–121; sequence TRSPTESPQSSGSG. A disordered region spans residues 108 to 129; sequence TRSPTESPQSSGSGLRSIPSPI. Zn(2+) contacts are provided by Cys150, Cys153, Cys164, and Cys167. The segment at 198 to 219 is disordered; that stretch reads WRGGCSSSNSQRRSPPTSKRDS. Positions 202-214 are enriched in polar residues; sequence CSSSNSQRRSPPT. ANK repeat units lie at residues 253 to 283 and 306 to 333; these read RKTD…SGGD and YTLV…QHAA. The OTU domain occupies 425–585; it reads LYALWNRTAG…RGHFSALVAM (161 aa). Catalysis depends on Cys436, which acts as the Nucleophile. His578 acts as the Proton acceptor in catalysis.

This sequence belongs to the peptidase C64 family.

It is found in the cytoplasm. Its subcellular location is the nucleus. The enzyme catalyses Thiol-dependent hydrolysis of ester, thioester, amide, peptide and isopeptide bonds formed by the C-terminal Gly of ubiquitin (a 76-residue protein attached to proteins as an intracellular targeting signal).. Functionally, ubiquitin thioesterase, which specifically hydrolyzes 'Lys-29'-linked and 'Lys-33'-linked diubiquitin. Also cleaves 'Lys-63'-linked chains, but with 40-fold less efficiency compared to 'Lys-29'-linked ones. Positive regulator of the Wnt signaling pathway that deubiquitinates apc protein, a negative regulator of Wnt-mediated transcription. Acts as a regulator of autophagy by mediating deubiquitination of pik3c3/vps34, thereby promoting autophagosome maturation. Plays a role in the regulation of cell morphology and cytoskeletal organization. Required in the stress fiber dynamics and cell migration. This chain is Ubiquitin thioesterase zranb1-A (zranb1-a), found in Xenopus laevis (African clawed frog).